Consider the following 242-residue polypeptide: Glucosamine-6-phosphate deaminase (242 aa).

Asp67 (proton acceptor; for enolization step) is an active-site residue. The For ring-opening step role is filled by Asn137. The active-site Proton acceptor; for ring-opening step is the His139. Residue Glu144 is the For ring-opening step of the active site.

The protein belongs to the glucosamine/galactosamine-6-phosphate isomerase family. NagB subfamily.

The enzyme catalyses alpha-D-glucosamine 6-phosphate + H2O = beta-D-fructose 6-phosphate + NH4(+). It participates in amino-sugar metabolism; N-acetylneuraminate degradation; D-fructose 6-phosphate from N-acetylneuraminate: step 5/5. Functionally, catalyzes the reversible isomerization-deamination of glucosamine 6-phosphate (GlcN6P) to form fructose 6-phosphate (Fru6P) and ammonium ion. The polypeptide is Glucosamine-6-phosphate deaminase (Staphylococcus saprophyticus subsp. saprophyticus (strain ATCC 15305 / DSM 20229 / NCIMB 8711 / NCTC 7292 / S-41)).